The primary structure comprises 268 residues: Ribosomal RNA small subunit methyltransferase A (268 aa).

S-adenosyl-L-methionine is bound by residues asparagine 17, leucine 19, glycine 44, glutamate 65, aspartate 89, and asparagine 110.

Belongs to the class I-like SAM-binding methyltransferase superfamily. rRNA adenine N(6)-methyltransferase family. RsmA subfamily.

Its subcellular location is the cytoplasm. The catalysed reaction is adenosine(1518)/adenosine(1519) in 16S rRNA + 4 S-adenosyl-L-methionine = N(6)-dimethyladenosine(1518)/N(6)-dimethyladenosine(1519) in 16S rRNA + 4 S-adenosyl-L-homocysteine + 4 H(+). Specifically dimethylates two adjacent adenosines (A1518 and A1519) in the loop of a conserved hairpin near the 3'-end of 16S rRNA in the 30S particle. May play a critical role in biogenesis of 30S subunits. The sequence is that of Ribosomal RNA small subunit methyltransferase A from Acidithiobacillus ferrooxidans (strain ATCC 53993 / BNL-5-31) (Leptospirillum ferrooxidans (ATCC 53993)).